A 624-amino-acid chain; its full sequence is Plastin-2 (624 aa).

EF-hand domains are found at residues 9-44 (EEME…ANLP) and 49-84 (RVRE…LKSS). Residues Asp22, Asp24, Asn26, His28, Glu33, Asp62, Asn64, Asp66, Lys68, and Glu73 each contribute to the Ca(2+) site. 4 Calponin-homology (CH) domains span residues 118–234 (EEEK…KIGL), 262–373 (LSPE…NKYP), 392–501 (TREE…RRYT), and 513–621 (KIID…ARGM). Actin-binding stretches follow at residues 118–373 (EEEK…NKYP) and 392–621 (TREE…ARGM).

As to quaternary structure, monomer. As to expression, expressed by macrophages (at protein level).

It is found in the cytoplasm. The protein localises to the cytoskeleton. It localises to the cell junction. Its subcellular location is the cell projection. The protein resides in the ruffle membrane. Its function is as follows. Actin-binding protein. Plays a role in the activation of T-cells. In Danio rerio (Zebrafish), this protein is Plastin-2.